The following is a 512-amino-acid chain: CaM kinase-like vesicle-associated protein (512 aa).

One can recognise a Protein kinase domain in the interval Tyr-24–Ile-286. The tract at residues Ala-328–Gly-347 is disordered. Over residues Ser-332–Gly-347 the composition is skewed to low complexity. Phosphoserine is present on Ser-392. The disordered stretch occupies residues Ala-393–Ser-512. The span at Thr-398 to Pro-439 shows a compositional bias: polar residues. Thr-446 bears the Phosphothreonine mark. The segment covering Thr-449 to Ser-460 has biased composition (polar residues). Residues Ala-461–Pro-478 show a composition bias toward low complexity. Phosphothreonine is present on Thr-470.

Belongs to the protein kinase superfamily. CAMK Ser/Thr protein kinase family. In terms of assembly, interacts with calmodulin, in the presence of calcium. Ca(2+) serves as cofactor.

The protein resides in the cell membrane. It is found in the cytoplasmic vesicle membrane. Its function is as follows. Does not appear to have detectable kinase activity. This is CaM kinase-like vesicle-associated protein (Camkv) from Mus musculus (Mouse).